Reading from the N-terminus, the 68-residue chain is Protein SlyX homolog (68 aa).

Belongs to the SlyX family.

In Pseudomonas putida (strain ATCC 700007 / DSM 6899 / JCM 31910 / BCRC 17059 / LMG 24140 / F1), this protein is Protein SlyX homolog.